The chain runs to 324 residues: MTSTLIPKETSTPGGRDLRDARADYFFKLLLTAAVAFVLIALVSAALSMLWGGRQALQLQGVSFFYSTEWNPVENKYGALTPIYGTIVTALIAMLIAMPVSLGIAFFLTEVAPRWLRTPIGTAIELLAGIPSIIYGMWGLFVLVPVMTDYITPFLNDHIGTLPLIGTLFQGPPLGIGTLTAGFVLAIMVIPFISSMMREVFLTVPTQLKESAYALGSTKWEVSWNIVLPYTRSAVIGGMFLGLGRALGETMAVAFVIGNSVRLSPSLLTPGTTIAALIANDFGEATETYRSALLLLGFVLFIVTFAVLVIARLMLLRLSRKEGN.

The next 6 helical transmembrane spans lie at 29–49, 87–107, 126–146, 173–193, 235–255, and 291–311; these read LLLT…ALSM, IVTA…IAFF, LLAG…LVPV, PLGI…IPFI, VIGG…AVAF, and SALL…LVIA. The region spanning 83-311 is the ABC transmembrane type-1 domain; the sequence is IYGTIVTALI…IVTFAVLVIA (229 aa).

This sequence belongs to the binding-protein-dependent transport system permease family. CysTW subfamily.

The protein resides in the cell inner membrane. Part of a binding-protein-dependent transport system for phosphate; probably responsible for the translocation of the substrate across the membrane. The sequence is that of Phosphate transport system permease protein PstC (pstC) from Xylella fastidiosa (strain Temecula1 / ATCC 700964).